Here is a 272-residue protein sequence, read N- to C-terminus: MLTKRIIPCLDIKEGRVVKGTNFVELRDAGDPVELSKIYNEQGADELVFLDITASFEKRDIIIDVVKRTAEQVFIPLTVGGGIKTVDDFRKILRAGADKISINTSAVKTPELIKEASEIFGTQCVVVAMDVKRNYITDIQDENLKDKNVFETELGSCWFEVYIYGGREGTGIDAIEWAKKVENLGAGEILLTSMDADGTKDGYDLVLTKSISKNTNLPIIASGGCGNSKHVVDAFKDGKADAALMASILHYRECTVNDLKKEIEKNNISVRL.

Residues aspartate 11 and aspartate 130 contribute to the active site.

Belongs to the HisA/HisF family. As to quaternary structure, heterodimer of HisH and HisF.

The protein localises to the cytoplasm. The catalysed reaction is 5-[(5-phospho-1-deoxy-D-ribulos-1-ylimino)methylamino]-1-(5-phospho-beta-D-ribosyl)imidazole-4-carboxamide + L-glutamine = D-erythro-1-(imidazol-4-yl)glycerol 3-phosphate + 5-amino-1-(5-phospho-beta-D-ribosyl)imidazole-4-carboxamide + L-glutamate + H(+). The protein operates within amino-acid biosynthesis; L-histidine biosynthesis; L-histidine from 5-phospho-alpha-D-ribose 1-diphosphate: step 5/9. IGPS catalyzes the conversion of PRFAR and glutamine to IGP, AICAR and glutamate. The HisF subunit catalyzes the cyclization activity that produces IGP and AICAR from PRFAR using the ammonia provided by the HisH subunit. This is Imidazole glycerol phosphate synthase subunit HisF from Methanococcus maripaludis (strain C5 / ATCC BAA-1333).